The following is a 214-amino-acid chain: Cell division protein SepF (214 aa).

Residues 23–70 are disordered; the sequence is YYDDRAPSRGFPRPRFDDGYGRYDGDDYDDPRREPADCPPPAGYRGGY. The span at 36 to 58 shows a compositional bias: basic and acidic residues; sequence PRFDDGYGRYDGDDYDDPRREPA.

Belongs to the SepF family. As to quaternary structure, homodimer. Interacts with FtsZ.

The protein localises to the cytoplasm. Cell division protein that is part of the divisome complex and is recruited early to the Z-ring. Probably stimulates Z-ring formation, perhaps through the cross-linking of FtsZ protofilaments. Its function overlaps with FtsA. This chain is Cell division protein SepF, found in Mycolicibacterium paratuberculosis (strain ATCC BAA-968 / K-10) (Mycobacterium paratuberculosis).